We begin with the raw amino-acid sequence, 499 residues long: Maturase K (499 aa).

This sequence belongs to the intron maturase 2 family. MatK subfamily.

The protein localises to the plastid. It localises to the chloroplast. Usually encoded in the trnK tRNA gene intron. Probably assists in splicing its own and other chloroplast group II introns. This chain is Maturase K, found in Gymnocladus dioicus (Kentucky coffee tree).